A 391-amino-acid polypeptide reads, in one-letter code: S-adenosylmethionine synthase (391 aa).

ATP is bound at residue histidine 14. Aspartate 16 contacts Mg(2+). Glutamate 42 serves as a coordination point for K(+). The L-methionine site is built by glutamate 55 and glutamine 98. A flexible loop region spans residues 98 to 108 (QSVDIAIGVDE). ATP is bound by residues 172–174 (DGK), 238–239 (RF), aspartate 247, 253–254 (RK), alanine 270, and lysine 274. Aspartate 247 provides a ligand contact to L-methionine. L-methionine is bound at residue lysine 278.

Belongs to the AdoMet synthase family. In terms of assembly, homotetramer; dimer of dimers. Mg(2+) serves as cofactor. Requires K(+) as cofactor.

It localises to the cytoplasm. It catalyses the reaction L-methionine + ATP + H2O = S-adenosyl-L-methionine + phosphate + diphosphate. It functions in the pathway amino-acid biosynthesis; S-adenosyl-L-methionine biosynthesis; S-adenosyl-L-methionine from L-methionine: step 1/1. Its function is as follows. Catalyzes the formation of S-adenosylmethionine (AdoMet) from methionine and ATP. The overall synthetic reaction is composed of two sequential steps, AdoMet formation and the subsequent tripolyphosphate hydrolysis which occurs prior to release of AdoMet from the enzyme. In Clostridium botulinum (strain Okra / Type B1), this protein is S-adenosylmethionine synthase.